The chain runs to 348 residues: MTKRGFTYKDAGVDIDAGNTFVGLIKPFVKATSRPEVISDIGGFGGLFSLNTNKYRNPVLVSGTDGVGTKLKIAMMADRHDTVGIDLVAMCVNDIIVQGAEPLFFLDYFATGKLDPQRGAAVVKGISEGCVQAGCALIGGETAEMPGFYQPGEYDLAGFTVGVVERDNIIDGSSITVGNRLVGIASSGLHSNGYSLARKIIFESMGLGIDSILPGLGMSAADALLTPTKIYVKTILNLLRDFHVNGIAHITGGGLLENVPRVLPNGCKALVHLDSCPLPPLFSLLQEAGSVERDEMYRTFNCGIGMVLAVPENEADEILIRLSGLQEKAFIIGEIAKCEPGAEMVELV.

The protein belongs to the AIR synthase family.

It is found in the cytoplasm. It catalyses the reaction 2-formamido-N(1)-(5-O-phospho-beta-D-ribosyl)acetamidine + ATP = 5-amino-1-(5-phospho-beta-D-ribosyl)imidazole + ADP + phosphate + H(+). It participates in purine metabolism; IMP biosynthesis via de novo pathway; 5-amino-1-(5-phospho-D-ribosyl)imidazole from N(2)-formyl-N(1)-(5-phospho-D-ribosyl)glycinamide: step 2/2. This Geobacter sulfurreducens (strain ATCC 51573 / DSM 12127 / PCA) protein is Phosphoribosylformylglycinamidine cyclo-ligase.